Here is a 919-residue protein sequence, read N- to C-terminus: Leucine--tRNA ligase (919 aa).

Residues proline 83–histidine 93 carry the 'HIGH' region motif. Residues lysine 670 to serine 674 carry the 'KMSKS' region motif. Position 673 (lysine 673) interacts with ATP.

It belongs to the class-I aminoacyl-tRNA synthetase family.

It is found in the cytoplasm. The enzyme catalyses tRNA(Leu) + L-leucine + ATP = L-leucyl-tRNA(Leu) + AMP + diphosphate. The chain is Leucine--tRNA ligase from Psychrobacter cryohalolentis (strain ATCC BAA-1226 / DSM 17306 / VKM B-2378 / K5).